We begin with the raw amino-acid sequence, 838 residues long: Ribonuclease Z (838 aa).

S824 is modified (phosphoserine).

It belongs to the RNase Z family. Homodimer. It depends on Zn(2+) as a cofactor.

It localises to the cytoplasm. The protein localises to the nucleus. It carries out the reaction Endonucleolytic cleavage of RNA, removing extra 3' nucleotides from tRNA precursor, generating 3' termini of tRNAs. A 3'-hydroxy group is left at the tRNA terminus and a 5'-phosphoryl group is left at the trailer molecule.. Its function is as follows. Zinc phosphodiesterase, which displays some tRNA 3'-processing endonuclease activity. Probably involved in tRNA maturation, by removing a 3'-trailer from precursor tRNA. The chain is Ribonuclease Z (TRZ1) from Saccharomyces cerevisiae (strain ATCC 204508 / S288c) (Baker's yeast).